Reading from the N-terminus, the 1036-residue chain is Exportin-T (1036 aa).

The protein belongs to the exportin family.

The protein resides in the nucleus. It localises to the cytoplasm. TRNA nucleus export receptor which facilitates tRNA translocation across the nuclear pore complex. Involved in pre-tRNA splicing, probably by affecting the interaction of pre-tRNA with splicing endonuclease. The protein is Exportin-T (LOS1) of Phaeosphaeria nodorum (strain SN15 / ATCC MYA-4574 / FGSC 10173) (Glume blotch fungus).